Reading from the N-terminus, the 129-residue chain is ATP synthase epsilon chain (129 aa).

Belongs to the ATPase epsilon chain family. As to quaternary structure, F-type ATPases have 2 components, CF(1) - the catalytic core - and CF(0) - the membrane proton channel. CF(1) has five subunits: alpha(3), beta(3), gamma(1), delta(1), epsilon(1). CF(0) has three main subunits: a, b and c.

It is found in the cell inner membrane. Produces ATP from ADP in the presence of a proton gradient across the membrane. The polypeptide is ATP synthase epsilon chain (Campylobacter fetus subsp. fetus (strain 82-40)).